The following is a 527-amino-acid chain: Coproporphyrinogen III oxidase (527 aa).

Positions Met1–Val14 are enriched in low complexity. Residues Met1–Asp23 are disordered. FAD-binding positions include Gly33–Gly38, Glu56–Ser57, Lys64, and Gly78–Ser81. Positions Arg231 to Ser267 are disordered. The span at Gln236–Ser252 shows a compositional bias: low complexity. FAD is bound by residues Val300, Trp448, and Val487–Leu489.

The protein belongs to the protoporphyrinogen/coproporphyrinogen oxidase family. Coproporphyrinogen III oxidase subfamily. The cofactor is FAD.

The protein localises to the cytoplasm. It catalyses the reaction coproporphyrinogen III + 3 O2 = coproporphyrin III + 3 H2O2. It participates in porphyrin-containing compound metabolism; protoheme biosynthesis. Its function is as follows. Involved in coproporphyrin-dependent heme b biosynthesis. Catalyzes the oxidation of coproporphyrinogen III to coproporphyrin III. The polypeptide is Coproporphyrinogen III oxidase (Propionibacterium freudenreichii subsp. freudenreichii).